Here is a 230-residue protein sequence, read N- to C-terminus: Large ribosomal subunit protein uL3 (230 aa).

2 disordered regions span residues 125 to 149 (QAIG…SLGD) and 210 to 230 (PNPK…VKNE).

Belongs to the universal ribosomal protein uL3 family. In terms of assembly, part of the 50S ribosomal subunit. Forms a cluster with proteins L14 and L19.

Its function is as follows. One of the primary rRNA binding proteins, it binds directly near the 3'-end of the 23S rRNA, where it nucleates assembly of the 50S subunit. In Mesomycoplasma hyopneumoniae (strain J / ATCC 25934 / NCTC 10110) (Mycoplasma hyopneumoniae), this protein is Large ribosomal subunit protein uL3.